We begin with the raw amino-acid sequence, 424 residues long: Probable methyltransferase EP424R (424 aa).

The 213-residue stretch at 103 to 315 (QIVTNAWLKM…TYIVGKNRLR (213 aa)) folds into the Adrift-type SAM-dependent 2'-O-MTase domain. Positions 135 and 228 each coordinate S-adenosyl-L-methionine. Lysine 268 serves as the catalytic Proton acceptor.

The protein localises to the virion. The sequence is that of Probable methyltransferase EP424R from Ornithodoros (relapsing fever ticks).